Reading from the N-terminus, the 420-residue chain is MSGRPRTTSFAESCKPVQQPSSFGSMKVSRDKDGSKVTTVVATPGQGPDRQQEVTYTDTKVIGNGSFGVVYQAKLCDTGELVAIKKVLQDKRFKNRELQIMRKLDHCNIVRLRYFFYSSGEKKDEVYLNLVLDYVPETVYRVARHYSRAKQALPIIYVKLYMYQLFRSLAYIHSFGICHRDIKPQNLLLDPETAVLKLCDFGSAKQLVRGEPNVSYICSRYYRAPELIFGATDYTSSIDVWSAGCVLAELLLGQPIFPGDSGVDQLVEIIKVLGTPTREQIREMNPNYTEFKFPQIKAHPWTKVFRARTPPEAIALCSRLLEYTPTSRLTPLDACAHSFFDELRDPNLKLPNGREFPALFNFTTQELSSNPSLSSILIPAHARNQAAVSTTSNTTSTSDSNTGERGSTNNAASASASNSS.

Over residues 1–24 the composition is skewed to polar residues; the sequence is MSGRPRTTSFAESCKPVQQPSSFG. Positions 1–50 are disordered; the sequence is MSGRPRTTSFAESCKPVQQPSSFGSMKVSRDKDGSKVTTVVATPGQGPDR. A Protein kinase domain is found at 56 to 340; that stretch reads YTDTKVIGNG…PLDACAHSFF (285 aa). Residues 62-70 and K85 each bind ATP; that span reads IGNGSFGVV. The active-site Proton acceptor is D181. Residues 384–420 form a disordered region; sequence NQAAVSTTSNTTSTSDSNTGERGSTNNAASASASNSS. Composition is skewed to low complexity over residues 389-401 and 409-420; these read STTS…SDSN and NNAASASASNSS.

The protein belongs to the protein kinase superfamily. CMGC Ser/Thr protein kinase family. GSK-3 subfamily. Phosphorylated. Activated by phosphorylation at Tyr-216.

The protein resides in the cytoplasm. Its subcellular location is the nucleus. It localises to the cell membrane. It catalyses the reaction L-seryl-[tau protein] + ATP = O-phospho-L-seryl-[tau protein] + ADP + H(+). The enzyme catalyses L-threonyl-[tau protein] + ATP = O-phospho-L-threonyl-[tau protein] + ADP + H(+). Functionally, plays a role in the organization of the formation of the main body axis of developing embryo. Acts as an inhibitor of differentiation of primary neurons. Inhibits the ability of ectopically expressed NEUROD1 and other bHLH factors to promote early retinal cell differentiation. May participate in the Wnt signaling pathway. May regulate the circadian clock via phosphorylation of the major clock components. In Xenopus laevis (African clawed frog), this protein is Glycogen synthase kinase-3 beta (gsk3b).